The primary structure comprises 360 residues: Popeye domain-containing protein 1 (360 aa).

At 1-48 the chain is on the extracellular side; it reads MNYTESSPLRESTAIGFTPELESIIPVPSNKTTCENWREIHHLVFHVA. Residues Asn-2 and Asn-30 are each glycosylated (N-linked (GlcNAc...) asparagine). The helical transmembrane segment at 49–69 threads the bilayer; sequence NICFAVGLVIPTTLHLHMIFL. Arg-70 is a topological domain (cytoplasmic). The helical transmembrane segment at 71-91 threads the bilayer; the sequence is GMLTLGCTLYIVWATLYRCAL. A topological domain (extracellular) is located at residue Asp-92. A helical membrane pass occupies residues 93-113; the sequence is IMIWNSVFLGVNILHLSYLLY. The interval 93–115 is required for interaction with CAV3; sequence IMIWNSVFLGVNILHLSYLLYKK. Residues 114-360 lie on the Cytoplasmic side of the membrane; that stretch reads KKRPVKIEKE…PNTLKVHQLP (247 aa). Positions 136 to 186 are required for interaction with KCNK2; the sequence is RVPPDLFRRLTGQFCMIQTLKKGQTYAAEDKTSVDDRLSILLKGKMKVSYR. Ser-295 and Ser-318 each carry phosphoserine. Residues 317 to 360 form a disordered region; the sequence is SSLHVSSPHQRASAKMKPIEEGAEDDDDVFEPASPNTLKVHQLP. A compositionally biased stretch (acidic residues) spans 337–346; it reads EGAEDDDDVF. Residues 350 to 360 are compositionally biased toward polar residues; it reads SPNTLKVHQLP.

Belongs to the popeye family. Homodimer. Homodimerization requires the C-terminus cytoplasmic region. Interacts (via the C-terminus cytoplasmic tail) with TJP1. Interacts (via the C-terminus cytoplasmic tail) with ARHGEF25/GEFT (via the DH domain). Interacts (via the C-terminus cytoplasmic tail) with VAMP3. Interacts with KCNK2; the interaction enhances KCNK2 surface expression and is inhibited by cAMP. Interacts with CAV3. In terms of tissue distribution, expressed in epithelial cells (at protein level). Expressed in fetal and adult heart and skeletal muscle.

It is found in the lateral cell membrane. The protein localises to the cell junction. Its subcellular location is the tight junction. The protein resides in the membrane. It localises to the cell membrane. It is found in the sarcolemma. The protein localises to the caveola. In terms of biological role, cell adhesion molecule involved in the establishment and/or maintenance of cell integrity. Involved in the formation and regulation of the tight junction (TJ) paracellular permeability barrier in epithelial cells. Plays a role in VAMP3-mediated vesicular transport and recycling of different receptor molecules through its interaction with VAMP3. Plays a role in the regulation of cell shape and movement by modulating the Rho-family GTPase activity through its interaction with ARHGEF25/GEFT. Induces primordial adhesive contact and aggregation of epithelial cells in a Ca(2+)-independent manner. Also involved in striated muscle regeneration and repair and in the regulation of cell spreading. Important for the maintenance of cardiac function. Plays a regulatory function in heart rate dynamics mediated, at least in part, through cAMP-binding and, probably, by increasing cell surface expression of the potassium channel KCNK2 and enhancing current density. Is also a caveolae-associated protein important for the preservation of caveolae structural and functional integrity as well as for heart protection against ischemia injury. The polypeptide is Popeye domain-containing protein 1 (Homo sapiens (Human)).